Here is a 322-residue protein sequence, read N- to C-terminus: Solute carrier family 35 member B1 (322 aa).

A run of 8 helical transmembrane segments spans residues 12–32, 51–71, 85–105, 136–156, 168–188, 210–230, 243–263, and 285–305; these read LRLP…GILQ, FALT…KILI, WLYA…NSAL, YPMA…LFMY, TIGY…LTGV, LWST…WEFL, ILLF…TVVY, and VILF…LVFL. The short motif at 318–322 is the Di-lysine motif element; the sequence is KKTSH.

This sequence belongs to the nucleotide-sugar transporter family. SLC35B subfamily.

The protein localises to the endoplasmic reticulum membrane. The enzyme catalyses ADP(in) + ATP(out) = ADP(out) + ATP(in). The catalysed reaction is UDP(out) + ATP(in) = UDP(in) + ATP(out). It carries out the reaction UTP(out) + ATP(in) = UTP(in) + ATP(out). It catalyses the reaction dATP(out) + ATP(in) = dATP(in) + ATP(out). In terms of biological role, ATP:ADP antiporter that catalyzes the exchange of ATP and ADP across the endoplasmic reticulum (ER) membrane. Imports ATP from the cytosol to the ER lumen and exports ADP in the opposite direction. Regulates ER energy metabolism and protein biogenesis. Appears to be part of a calcium-dependent ER to cytosol low energy response axis, where calcium efflux from ER to the cytosol triggers ATP import into the ER lumen to maintain sufficient ATP supply. Provides ATP to ER chaperone HSPA5 that drives protein folding and trafficking in the ER. Can transport dATP, UTP or UDP in exchange for ATP, but the physiological relevance of this process remains to be established. The sequence is that of Solute carrier family 35 member B1 (SLC35B1) from Bos taurus (Bovine).